The sequence spans 256 residues: Neuroendocrine secretory protein 55 (256 aa).

The first 46 residues, 1–46 (MDRRSRAHQWRRARHNYNDLCPPIGRRAATALLWLSCSIALLRALA), serve as a signal peptide directing secretion. Residues 61–256 (SFLNAHHRSA…RKGPIPIRRH (196 aa)) form a disordered region. Positions 86–103 (ESDHEHEEAEPELARPEC) are enriched in basic and acidic residues. Composition is skewed to acidic residues over residues 104 to 139 (LEYD…ETEP) and 206 to 216 (LDEDPRDPEES). Basic residues predominate over residues 225–236 (QPRRCKTRRPAR).

Belongs to the NESP55 family. Binds keratan sulfate chains. Post-translationally, may be proteolytically processed to give rise to a number of active peptides.

The protein localises to the cytoplasmic vesicle. The protein resides in the secretory vesicle. It localises to the synaptic vesicle. Its subcellular location is the secreted. This Rattus norvegicus (Rat) protein is Neuroendocrine secretory protein 55.